Consider the following 441-residue polypeptide: Glutamate--tRNA ligase 2 (441 aa).

The 'HIGH' region signature appears at 9 to 19; the sequence is PSPTGYIHVGN. Positions 239 to 243 match the 'KMSKS' region motif; the sequence is ALSKR. Lys242 contacts ATP.

This sequence belongs to the class-I aminoacyl-tRNA synthetase family. Glutamate--tRNA ligase type 1 subfamily. As to quaternary structure, monomer.

The protein resides in the cytoplasm. It carries out the reaction tRNA(Glu) + L-glutamate + ATP = L-glutamyl-tRNA(Glu) + AMP + diphosphate. Its function is as follows. Catalyzes the attachment of glutamate to tRNA(Glu) in a two-step reaction: glutamate is first activated by ATP to form Glu-AMP and then transferred to the acceptor end of tRNA(Glu). The protein is Glutamate--tRNA ligase 2 of Cereibacter sphaeroides (strain ATCC 17023 / DSM 158 / JCM 6121 / CCUG 31486 / LMG 2827 / NBRC 12203 / NCIMB 8253 / ATH 2.4.1.) (Rhodobacter sphaeroides).